A 324-amino-acid chain; its full sequence is Holliday junction branch migration complex subunit RuvB (324 aa).

Residues 1 to 168 (MEDLALRPKT…FGIVEHLEYY (168 aa)) are large ATPase domain (RuvB-L). ATP contacts are provided by Y14, I15, G48, K51, T52, T53, D97, T146, Y168, and R205. Residue T52 coordinates Mg(2+). The small ATPAse domain (RuvB-S) stretch occupies residues 169–239 (TPEELAQGVM…RALEALAALG (71 aa)). Residues 242 to 324 (ELGLEKRDRE…PPPVGPLLEP (83 aa)) form a head domain (RuvB-H) region. R297 and R302 together coordinate DNA.

The protein belongs to the RuvB family. In terms of assembly, homohexamer. Forms a complex with RuvA. Electron microscopic images suggest 2 closely interacting RuvA tetramers sandwich the HJ DNA; each tetramer associates with an RuvB hexamer. Forms 2 complexes with Holliday junction (HJ) DNA which probably have 1 and 2 RuvA tetramers per complex (called complex I and complex II). Forms an RuvA(8)-RuvB(12)-Holliday junction (HJ) complex. HJ DNA is sandwiched between 2 RuvA tetramers; dsDNA enters through RuvA and exits via RuvB. An RuvB hexamer assembles on each DNA strand where it exits the tetramer. Each RuvB hexamer is contacted by two RuvA subunits (via domain III) on 2 adjacent RuvB subunits; this complex drives branch migration. In the full resolvosome a probable DNA-RuvA(4)-RuvB(12)-RuvC(2) complex forms which resolves the HJ. Requires Mg(2+) as cofactor.

Its subcellular location is the cytoplasm. The enzyme catalyses ATP + H2O = ADP + phosphate + H(+). Its activity is regulated as follows. The activity of RuvB is enhanced by E.coli RuvA. The RuvA-RuvB-RuvC complex processes Holliday junction (HJ) DNA during genetic recombination and DNA repair, while the RuvA-RuvB complex plays an important role in the rescue of blocked DNA replication forks via replication fork reversal (RFR). RuvA specifically binds to HJ cruciform DNA, conferring on it an open structure. The RuvB hexamer acts as an ATP-dependent pump, pulling dsDNA into and through the RuvAB complex. RuvB forms 2 homohexamers on either side of HJ DNA bound by 1 or 2 RuvA tetramers; 4 subunits per hexamer contact DNA at a time. Coordinated motions by a converter formed by DNA-disengaged RuvB subunits stimulates ATP hydrolysis and nucleotide exchange. Immobilization of the converter enables RuvB to convert the ATP-contained energy into a lever motion, pulling 2 nucleotides of DNA out of the RuvA tetramer per ATP hydrolyzed, thus driving DNA branch migration. The RuvB motors rotate together with the DNA substrate, which together with the progressing nucleotide cycle form the mechanistic basis for DNA recombination by continuous HJ branch migration. Branch migration allows RuvC to scan DNA until it finds its consensus sequence, where it cleaves and resolves cruciform DNA. Its function is as follows. RuvB is a Mg(2+)-dependent, DNA-dependent ATPase with an equal preference for supercoiled and linear dsDNA; all (d)NTPs tested were efficiently hydrolyzed. Promotes Holliday junction (HJ) dissociation at 60 degrees Celsius in the presence of ATP but not ATP-gamma-S or ADP; (d)ATP, (d)CTP and dTTP also power dissociation in the absence of any RuvA. RuvA stimulates the ATPase of RuvB in the presence of dsDNA and HJ branch migration by RuvB. Excess RuvB stimulates some branch migration in vitro even in the presence of mutant RuvA. The chain is Holliday junction branch migration complex subunit RuvB from Thermus thermophilus (strain ATCC 27634 / DSM 579 / HB8).